The chain runs to 663 residues: Transketolase 1 (663 aa).

A substrate-binding site is contributed by H26. The residue at position 46 (K46) is an N6-acetyllysine. Thiamine diphosphate contacts are provided by residues H66 and 114 to 116 (GPL). Mg(2+) is bound at residue D155. Thiamine diphosphate is bound by residues G156 and N185. The Mg(2+) site is built by N185 and I187. 3 residues coordinate substrate: H261, R358, and S385. Residue H261 coordinates thiamine diphosphate. Catalysis depends on E411, which acts as the Proton donor. Position 437 (F437) interacts with thiamine diphosphate. 4 residues coordinate substrate: H461, D469, H473, and R520.

The protein belongs to the transketolase family. As to quaternary structure, homodimer. Mg(2+) serves as cofactor. The cofactor is Ca(2+). Requires Mn(2+) as cofactor. It depends on Co(2+) as a cofactor. Thiamine diphosphate is required as a cofactor.

The catalysed reaction is D-sedoheptulose 7-phosphate + D-glyceraldehyde 3-phosphate = aldehydo-D-ribose 5-phosphate + D-xylulose 5-phosphate. Its function is as follows. Catalyzes the transfer of a two-carbon ketol group from a ketose donor to an aldose acceptor, via a covalent intermediate with the cofactor thiamine pyrophosphate. Thus, catalyzes the reversible transfer of a two-carbon ketol group from sedoheptulose-7-phosphate to glyceraldehyde-3-phosphate, producing xylulose-5-phosphate and ribose-5-phosphate. This chain is Transketolase 1 (tktA), found in Escherichia coli (strain K12).